Consider the following 333-residue polypeptide: Beta-ketoacyl-[acyl-carrier-protein] synthase III (333 aa).

Active-site residues include cysteine 116 and histidine 258. Residues 259 to 263 form an ACP-binding region; that stretch reads QANQR. Asparagine 288 is a catalytic residue.

The protein belongs to the thiolase-like superfamily. FabH family. As to quaternary structure, homodimer.

Its subcellular location is the cytoplasm. The enzyme catalyses malonyl-[ACP] + acetyl-CoA + H(+) = 3-oxobutanoyl-[ACP] + CO2 + CoA. The protein operates within lipid metabolism; fatty acid biosynthesis. Catalyzes the condensation reaction of fatty acid synthesis by the addition to an acyl acceptor of two carbons from malonyl-ACP. Catalyzes the first condensation reaction which initiates fatty acid synthesis and may therefore play a role in governing the total rate of fatty acid production. Possesses both acetoacetyl-ACP synthase and acetyl transacylase activities. Its substrate specificity determines the biosynthesis of branched-chain and/or straight-chain of fatty acids. This chain is Beta-ketoacyl-[acyl-carrier-protein] synthase III, found in Microcystis aeruginosa (strain NIES-843 / IAM M-2473).